The sequence spans 403 residues: Deubiquitinase and deneddylase Dub1 (403 aa).

The segment covering 1–11 (MLSPTNSTSKT) has biased composition (polar residues). Residues 1–24 (MLSPTNSTSKTAPVPPRDSSKPVL) are disordered. The chain crosses the membrane as a helical span at residues 40 to 60 (TALAVLLVVVTLGLILLFYSF). Residues 77-132 (KEQPTISIPVPLPSPPLAVPRPSTPPAPTPAISRPSTPSAPKPSTPPPLLPKAPKP) are disordered. Composition is skewed to pro residues over residues 86-105 (VPLP…PAPT) and 114-130 (PSAP…PKAP). Residues H277, D294, and C347 contribute to the active site.

The protein belongs to the peptidase C48 family.

The protein resides in the secreted. It localises to the host cell. Its subcellular location is the membrane. Effector proteins function to alter host cell physiology and promote bacterial survival in host tissues. This protease possesses deubiquitinating and deneddylating activities. This chain is Deubiquitinase and deneddylase Dub1 (cdu1), found in Chlamydia trachomatis serovar L2b (strain UCH-1/proctitis).